The following is a 181-amino-acid chain: Adenine phosphoribosyltransferase (181 aa).

This sequence belongs to the purine/pyrimidine phosphoribosyltransferase family. In terms of assembly, homodimer.

It localises to the cytoplasm. The enzyme catalyses AMP + diphosphate = 5-phospho-alpha-D-ribose 1-diphosphate + adenine. The protein operates within purine metabolism; AMP biosynthesis via salvage pathway; AMP from adenine: step 1/1. Catalyzes a salvage reaction resulting in the formation of AMP, that is energically less costly than de novo synthesis. This chain is Adenine phosphoribosyltransferase, found in Rhizobium leguminosarum bv. trifolii (strain WSM2304).